The chain runs to 142 residues: Small ribosomal subunit protein bS6 (142 aa).

The interval 110 to 142 (NKKPSHAKEKHEKTEHAHSHHTEEAGSKESHSE) is disordered.

Belongs to the bacterial ribosomal protein bS6 family.

Binds together with bS18 to 16S ribosomal RNA. The chain is Small ribosomal subunit protein bS6 from Helicobacter acinonychis (strain Sheeba).